A 421-amino-acid polypeptide reads, in one-letter code: Testin (421 aa).

Positions 92-199 (MILTNPVAAK…GDVKLPCEMD (108 aa)) constitute a PET domain. The disordered stretch occupies residues 133-164 (EKQPVAGSEGAQYRKKQLAKQLPAHDQDPSKC). The segment covering 155–164 (PAHDQDPSKC) has biased composition (basic and acidic residues). LIM zinc-binding domains lie at 234–297 (YSCY…CDSE), 299–359 (PRCA…NHAV), and 362–421 (QGCH…KMMS).

This sequence belongs to the prickle / espinas / testin family. Interacts via LIM domain 1 with ZYX. Interacts (via LIM domain 3) with ENAH and VASP. Interacts with ALKBH4, talin, actin, alpha-actinin, GRIP1 and PXN. Interacts (via LIM domain 2) with ACTL7A (via N-terminus). Heterodimer with ACTL7A; the heterodimer interacts with ENAH to form a heterotrimer.

The protein resides in the cytoplasm. It localises to the cell junction. The protein localises to the focal adhesion. In terms of biological role, scaffold protein that may play a role in cell adhesion, cell spreading and in the reorganization of the actin cytoskeleton. Plays a role in the regulation of cell proliferation. May act as a tumor suppressor. The protein is Testin (TES) of Microcebus murinus (Gray mouse lemur).